The primary structure comprises 294 residues: Pyridoxal 5'-phosphate synthase subunit PdxS (294 aa).

D-ribose 5-phosphate is bound at residue D24. K81 functions as the Schiff-base intermediate with D-ribose 5-phosphate in the catalytic mechanism. Residue G153 coordinates D-ribose 5-phosphate. Residue R165 participates in D-glyceraldehyde 3-phosphate binding. Residues G214 and G235–S236 each bind D-ribose 5-phosphate.

Belongs to the PdxS/SNZ family. As to quaternary structure, in the presence of PdxT, forms a dodecamer of heterodimers.

It catalyses the reaction aldehydo-D-ribose 5-phosphate + D-glyceraldehyde 3-phosphate + L-glutamine = pyridoxal 5'-phosphate + L-glutamate + phosphate + 3 H2O + H(+). The protein operates within cofactor biosynthesis; pyridoxal 5'-phosphate biosynthesis. Catalyzes the formation of pyridoxal 5'-phosphate from ribose 5-phosphate (RBP), glyceraldehyde 3-phosphate (G3P) and ammonia. The ammonia is provided by the PdxT subunit. Can also use ribulose 5-phosphate and dihydroxyacetone phosphate as substrates, resulting from enzyme-catalyzed isomerization of RBP and G3P, respectively. The protein is Pyridoxal 5'-phosphate synthase subunit PdxS of Bacillus licheniformis (strain ATCC 14580 / DSM 13 / JCM 2505 / CCUG 7422 / NBRC 12200 / NCIMB 9375 / NCTC 10341 / NRRL NRS-1264 / Gibson 46).